The following is a 550-amino-acid chain: MKKQHSKISNFIQKIISEDIQNKKITHVKTRFPPEPNGYLHLGHAKSICLNFDLAQEFKGTCNLRFDDTNPKNEDTCYINSIIQDIKWLEYKWHNKIRYASLYFNKIYQYAIKLIKKGLAYVDQLSPEEIRTFRGTLTTSGIDSPYRTQSIEKNLNLFKKMKQGKMLEGTACLRAKIDMASNCITMRDPVLYRIIFSKHHQTNKKWCIYPTYDFTHCISDALEKITHSLCTLEFQDHRKLYEWILKKIDISCNTHQYEFSRLKLEYSVLSKRKLNLLVNNKVVNGWDDPRMPTLSGLRNRGYTPSSIKLFCKKIGITKQENTIQLSFLESCIRSDLNPIAPRYMAVIHPIKIQICNLSDNYEEILNIPNHPTKPNMGCHKSIFSNTLYIDQNDFYENKSELLKKLAIGKEIRLRYSYVIKAHKIKKDQNNNIKTIFCTYDKNTLGKNPKNRKILGVIHWISEKNVLPARFFLYDKLFTIQSPETVKNFLQYINTNSLVIKYGFVEKDILTNISTTAYQFEREGYFCINKNFSITKNLTFNRIVTLKDKIK.

The 'HIGH' region motif lies at 34–44; it reads PEPNGYLHLGH. Residues 35–37 and 41–47 contribute to the ATP site; these read EPN and HLGHAKS. Asp-67 and Tyr-212 together coordinate L-glutamine. ATP contacts are provided by residues Thr-231, 261–262, and 269–271; these read RL and LSK. The 'KMSKS' region signature appears at 268–272; sequence VLSKR.

Belongs to the class-I aminoacyl-tRNA synthetase family. Monomer.

Its subcellular location is the cytoplasm. It catalyses the reaction tRNA(Gln) + L-glutamine + ATP = L-glutaminyl-tRNA(Gln) + AMP + diphosphate. The sequence is that of Glutamine--tRNA ligase from Buchnera aphidicola subsp. Baizongia pistaciae (strain Bp).